The sequence spans 495 residues: Probable cytochrome P450 513C1 (495 aa).

A helical transmembrane segment spans residues Met1–Asn21. Residue Cys441 participates in heme binding.

Belongs to the cytochrome P450 family. Heme is required as a cofactor.

Its subcellular location is the membrane. The protein is Probable cytochrome P450 513C1 (cyp513C1) of Dictyostelium discoideum (Social amoeba).